The following is a 342-amino-acid chain: Heat-inducible transcription repressor HrcA (342 aa).

Belongs to the HrcA family.

Functionally, negative regulator of class I heat shock genes (grpE-dnaK-dnaJ and groELS operons). Prevents heat-shock induction of these operons. This is Heat-inducible transcription repressor HrcA from Leptospira borgpetersenii serovar Hardjo-bovis (strain JB197).